The primary structure comprises 365 residues: uncharacterized protein (365 aa).

Residues 18 to 46 are a coiled coil; the sequence is TAQEALTLIEKLDSDYKEKEEKITALSVH.

This is an uncharacterized protein from Bacillus subtilis (strain 168).